A 135-amino-acid polypeptide reads, in one-letter code: Large ribosomal subunit protein bL21 (135 aa).

The interval 114–135 (EAEKETPVLDETPAEEVETAAE) is disordered. Residues 125–135 (TPAEEVETAAE) are compositionally biased toward acidic residues.

The protein belongs to the bacterial ribosomal protein bL21 family. Part of the 50S ribosomal subunit. Contacts protein L20.

In terms of biological role, this protein binds to 23S rRNA in the presence of protein L20. The sequence is that of Large ribosomal subunit protein bL21 from Nostoc punctiforme (strain ATCC 29133 / PCC 73102).